We begin with the raw amino-acid sequence, 391 residues long: MTAAQGNSNETLFSSYKMGRFDLSHRVVLAPMTRCRALNGVPNAALAEYYAQRTTPGGFLISEGTMVSPGSAGFPHVPGIYSDEQVEAWKQVVEAVHAKGGFIFCQLWHVGRASHAVYQPNGGSPISSTNKPISENRWRVLLPDGSHVKYPKPRALEASEIPRVVEDYCLSALNAIRAGFDGIEIHGAHGYLIDQFLKDGINDRTDQYGGSIANRCRFLKQVVEGVVSAIGASKVGVRVSPAIDHLDATDSDPLSLGLAVVGMLNKLQGVNGSKLAYLHVTQPRYHAYGQTESGRQGSDEEEAKLMKSLRMAYNGTFMSSGGFNKELGMQAVQQGDADLVSYGRLFIANPDLVSRFKIDGELNKYNRKTFYTQDPVVGYTDYPFLAPFSRL.

At Met-1 the chain carries N-acetylmethionine. N-acetylthreonine; in 12-oxophytodienoate reductase 3, N-terminally processed is present on Thr-2. FMN contacts are provided by residues Pro-31–Thr-33, Gly-64, and Gln-106. His-186 is a binding site for substrate. Tyr-191 acts as the Proton donor in catalysis. Position 238 (Arg-238) interacts with FMN. Arg-284 serves as a coordination point for substrate. Residues Ser-320–Gly-322 and Gly-343–Arg-344 contribute to the FMN site. Residues Ser-389 to Leu-391 carry the Microbody targeting signal motif.

It belongs to the NADH:flavin oxidoreductase/NADH oxidase family. The cofactor is FMN. As to expression, expressed in green seedling, leaves, flowers (anthers, pistil, petal and stamen), and to a lower extent in roots and siliques. Specifically expressed in filament during anther dehiscence initiation.

The protein localises to the peroxisome. It carries out the reaction (1S,2S)-OPC-8 + NADP(+) = (9S,13S,15Z)-12-oxophyto-10,15-dienoate + NADPH + H(+). The protein operates within lipid metabolism; oxylipin biosynthesis. Functionally, specifically cleaves olefinic bonds in cyclic enones. Involved in the biosynthesis of jasmonic acid (JA) and perhaps in biosynthesis or metabolism of other oxylipin signaling moleclules. Required for the spatial and temporal regulation of JA levels during dehiscence of anthers, promoting the stomium degeneration program. In vitro, reduces 9S,13S-12-oxophytodienoic acid (9S,13S-OPDA) and 9R,13R-OPDA to 9S,13S-OPC-8:0 and 9R,13R-OPC-8:0, respectively. Can detoxify the explosive 2,4,6-trinitrotoluene (TNT) in vitro by catalyzing its nitroreduction to form hydroxylamino-dinitrotoluene (HADNT). In Arabidopsis thaliana (Mouse-ear cress), this protein is 12-oxophytodienoate reductase 3.